The following is a 354-amino-acid chain: S-adenosylmethionine:tRNA ribosyltransferase-isomerase (354 aa).

Belongs to the QueA family. As to quaternary structure, monomer.

The protein localises to the cytoplasm. It carries out the reaction 7-aminomethyl-7-carbaguanosine(34) in tRNA + S-adenosyl-L-methionine = epoxyqueuosine(34) in tRNA + adenine + L-methionine + 2 H(+). The protein operates within tRNA modification; tRNA-queuosine biosynthesis. Functionally, transfers and isomerizes the ribose moiety from AdoMet to the 7-aminomethyl group of 7-deazaguanine (preQ1-tRNA) to give epoxyqueuosine (oQ-tRNA). The protein is S-adenosylmethionine:tRNA ribosyltransferase-isomerase of Methylobacterium radiotolerans (strain ATCC 27329 / DSM 1819 / JCM 2831 / NBRC 15690 / NCIMB 10815 / 0-1).